Reading from the N-terminus, the 137-residue chain is MSEEQKLVISSARRKTARATCYIYAGKGRVFVNNVPIELIPIEMVRLKIMEPLLLAGNDIRSKIDAKIITYGGGIMGQADAARMALARALVKFTGSKELEKIYRAYDRTMLAGDPRQTESEKWMRYSARRWRQKSYR.

This sequence belongs to the universal ribosomal protein uS9 family.

In Saccharolobus solfataricus (strain ATCC 35092 / DSM 1617 / JCM 11322 / P2) (Sulfolobus solfataricus), this protein is Small ribosomal subunit protein uS9 (rps9).